A 319-amino-acid chain; its full sequence is Protein SODIUM POTASSIUM ROOT DEFECTIVE 1 (319 aa).

Positions 1-13 (MLCASQASTTTLC) are enriched in polar residues. Disordered stretches follow at residues 1–113 (MLCA…TPQG) and 191–248 (SPDN…NSSS). Low complexity predominate over residues 14 to 27 (STMDQTSQPSSSSS). A compositionally biased stretch (basic and acidic residues) spans 36–49 (AIDRHNPIIRDGRR). A compositionally biased stretch (low complexity) spans 58–67 (LNPSSSSSST). 2 stretches are compositionally biased toward polar residues: residues 104 to 113 (SCFSSDTPQG) and 200 to 210 (TKASPTASLSS). Residues 224 to 242 (SPPPPPPPSPPQSSPPSPP) are compositionally biased toward pro residues. One can recognise an HMA domain in the interval 249 to 315 (DQVVVLRVSL…KVKNAQFWPE (67 aa)). Residues Cys260 and Cys263 each coordinate Zn(2+).

In terms of assembly, interacts with FT, but not with TSF (TWIN SISTER OF FT). In terms of tissue distribution, expressed in vascular tissues of cotyledons, rosette leaves and roots in developing seedlings before and during the floral transition. Expressed specifically in the phloem companion cells. Not detected in embryos or seeds. Not detected in the vegetative shoot apex.

The protein resides in the cytoplasm. It is found in the nucleus. Its subcellular location is the endoplasmic reticulum. Functionally, required for root meristem maintenance after germination. Involved in phloem translocation, starch accumulation and flowering. Promotes flowering in the photoperiod pathway. Regulates long-distance movement of FT from leaves to the shoot apex through the phloem stream. This chain is Protein SODIUM POTASSIUM ROOT DEFECTIVE 1, found in Arabidopsis thaliana (Mouse-ear cress).